The chain runs to 223 residues: UPF0173 metal-dependent hydrolase Amet_4625 (223 aa).

Belongs to the UPF0173 family.

This Alkaliphilus metalliredigens (strain QYMF) protein is UPF0173 metal-dependent hydrolase Amet_4625.